A 397-amino-acid chain; its full sequence is CCA-adding enzyme (397 aa).

2 residues coordinate ATP: glycine 27 and arginine 30. 2 residues coordinate CTP: glycine 27 and arginine 30. Mg(2+)-binding residues include aspartate 40 and aspartate 42. ATP contacts are provided by arginine 111, aspartate 154, arginine 157, arginine 160, and arginine 163. CTP is bound by residues arginine 111, aspartate 154, arginine 157, arginine 160, and arginine 163.

It belongs to the tRNA nucleotidyltransferase/poly(A) polymerase family. Bacterial CCA-adding enzyme type 3 subfamily. In terms of assembly, homodimer. Requires Mg(2+) as cofactor.

The catalysed reaction is a tRNA precursor + 2 CTP + ATP = a tRNA with a 3' CCA end + 3 diphosphate. It catalyses the reaction a tRNA with a 3' CCA end + 2 CTP + ATP = a tRNA with a 3' CCACCA end + 3 diphosphate. In terms of biological role, catalyzes the addition and repair of the essential 3'-terminal CCA sequence in tRNAs without using a nucleic acid template. Adds these three nucleotides in the order of C, C, and A to the tRNA nucleotide-73, using CTP and ATP as substrates and producing inorganic pyrophosphate. tRNA 3'-terminal CCA addition is required both for tRNA processing and repair. Also involved in tRNA surveillance by mediating tandem CCA addition to generate a CCACCA at the 3' terminus of unstable tRNAs. While stable tRNAs receive only 3'-terminal CCA, unstable tRNAs are marked with CCACCA and rapidly degraded. The sequence is that of CCA-adding enzyme from Bacillus licheniformis (strain ATCC 14580 / DSM 13 / JCM 2505 / CCUG 7422 / NBRC 12200 / NCIMB 9375 / NCTC 10341 / NRRL NRS-1264 / Gibson 46).